The primary structure comprises 166 residues: Transcription antitermination protein NusB (166 aa).

The segment covering M1–D18 has biased composition (basic and acidic residues). The tract at residues M1–E30 is disordered.

It belongs to the NusB family.

Involved in transcription antitermination. Required for transcription of ribosomal RNA (rRNA) genes. Binds specifically to the boxA antiterminator sequence of the ribosomal RNA (rrn) operons. The chain is Transcription antitermination protein NusB from Pseudomonas entomophila (strain L48).